The chain runs to 177 residues: Large ribosomal subunit protein uL6 (177 aa).

The protein belongs to the universal ribosomal protein uL6 family. In terms of assembly, part of the 50S ribosomal subunit.

This protein binds to the 23S rRNA, and is important in its secondary structure. It is located near the subunit interface in the base of the L7/L12 stalk, and near the tRNA binding site of the peptidyltransferase center. This chain is Large ribosomal subunit protein uL6, found in Parvibaculum lavamentivorans (strain DS-1 / DSM 13023 / NCIMB 13966).